A 172-amino-acid chain; its full sequence is Co-chaperone protein HscB (172 aa).

Residues 2–74 form the J domain; the sequence is DYFTLFGLPI…LKRAEYMLSL (73 aa).

This sequence belongs to the HscB family. As to quaternary structure, interacts with HscA and stimulates its ATPase activity. Interacts with IscU.

Co-chaperone involved in the maturation of iron-sulfur cluster-containing proteins. Seems to help targeting proteins to be folded toward HscA. This chain is Co-chaperone protein HscB, found in Pectobacterium carotovorum subsp. carotovorum (strain PC1).